A 547-amino-acid polypeptide reads, in one-letter code: Chaperonin GroEL 1 (547 aa).

Residues 30-33, Lys51, 87-91, Gly415, and Asp495 contribute to the ATP site; these read TLGP and DGTTT.

The protein belongs to the chaperonin (HSP60) family. As to quaternary structure, forms a cylinder of 14 subunits composed of two heptameric rings stacked back-to-back. Interacts with the co-chaperonin GroES.

Its subcellular location is the cytoplasm. It catalyses the reaction ATP + H2O + a folded polypeptide = ADP + phosphate + an unfolded polypeptide.. In terms of biological role, together with its co-chaperonin GroES, plays an essential role in assisting protein folding. The GroEL-GroES system forms a nano-cage that allows encapsulation of the non-native substrate proteins and provides a physical environment optimized to promote and accelerate protein folding. The sequence is that of Chaperonin GroEL 1 from Azorhizobium caulinodans (strain ATCC 43989 / DSM 5975 / JCM 20966 / LMG 6465 / NBRC 14845 / NCIMB 13405 / ORS 571).